Consider the following 465-residue polypeptide: Serine/threonine-protein kinase 38 (465 aa).

A2 bears the N-acetylalanine mark. Residues 62–87 (KRLRRSAHARKETEFLRLKRTRLGLE) form an interaction with S100B region. At T74 the chain carries Phosphothreonine. One can recognise a Protein kinase domain in the interval 89-382 (FESLKVIGRG…VEEIKSNSFF (294 aa)). Residues 95 to 103 (IGRGAFGEV) and K118 contribute to the ATP site. The active-site Proton acceptor is the D212. S264 carries the post-translational modification Phosphoserine. S281 is subject to Phosphoserine; by autocatalysis. The UFM1-interacting motif (UFIM) signature appears at 306–311 (WSLGVI). An AGC-kinase C-terminal domain is found at 383 to 455 (EGVDWEHIRE…KRFEGLTARG (73 aa)). Residue T444 is modified to Phosphothreonine; by STK24/MST3.

This sequence belongs to the protein kinase superfamily. AGC Ser/Thr protein kinase family. In terms of assembly, homodimeric S100B binds two molecules of STK38. Interacts with MOB1 and MOB2. Interacts with MAP3K1 and MAP3K2 (via the kinase catalytic domain). Forms a tripartite complex with MOBKL1B and STK3/MST2. Interacts with MICAL1; leading to inhibit the protein kinase activity by antagonizing activation by MST1/STK4. The cofactor is Mg(2+). ISGylated. Post-translationally, phosphorylated by STK3/MST2 and this is enhanced by MOBKL1B. Ubiquitously expressed with highest levels observed in peripheral blood leukocytes.

Its subcellular location is the nucleus. It is found in the cytoplasm. The protein resides in the chromosome. The enzyme catalyses L-seryl-[protein] + ATP = O-phospho-L-seryl-[protein] + ADP + H(+). The catalysed reaction is L-threonyl-[protein] + ATP = O-phospho-L-threonyl-[protein] + ADP + H(+). Activated by binding of S100B which releases autoinhibitory N-lobe interactions, enabling ATP to bind and the autophosphorylation of Ser-281. Thr-444 then undergoes calcium-dependent phosphorylation by STK24/MST3. Interactions between phosphorylated Thr-444 and the N-lobe promote additional structural changes that complete the activation of the kinase. Autoinhibition is also released by the binding of MOB1/MOBKL1A and MOB2/HCCA2 to the N-terminal of STK38. Its function is as follows. Serine/threonine-protein kinase that acts as a negative regulator of MAP3K1/2 signaling. Converts MAP3K2 from its phosphorylated form to its non-phosphorylated form and inhibits autophosphorylation of MAP3K2. Acts as an ufmylation 'reader' in a kinase-independent manner: specifically recognizes and binds mono-ufmylated histone H4 in response to DNA damage, promoting the recruitment of SUV39H1 to the double-strand breaks, resulting in ATM activation. The sequence is that of Serine/threonine-protein kinase 38 from Homo sapiens (Human).